The chain runs to 532 residues: 2,3-bisphosphoglycerate-independent phosphoglycerate mutase (532 aa).

Mn(2+) is bound by residues Asp-15 and Ser-65. Ser-65 acts as the Phosphoserine intermediate in catalysis. Residues His-126, 156-157, Arg-188, Arg-194, 258-261, and Lys-331 contribute to the substrate site; these read RD and RPDR. 5 residues coordinate Mn(2+): Asp-398, His-402, Asp-439, His-440, and His-457.

This sequence belongs to the BPG-independent phosphoglycerate mutase family. As to quaternary structure, monomer. Mn(2+) serves as cofactor.

It catalyses the reaction (2R)-2-phosphoglycerate = (2R)-3-phosphoglycerate. Its pathway is carbohydrate degradation; glycolysis; pyruvate from D-glyceraldehyde 3-phosphate: step 3/5. Catalyzes the interconversion of 2-phosphoglycerate and 3-phosphoglycerate. The chain is 2,3-bisphosphoglycerate-independent phosphoglycerate mutase from Nostoc punctiforme (strain ATCC 29133 / PCC 73102).